The sequence spans 121 residues: Small ribosomal subunit protein uS13 (121 aa).

The disordered stretch occupies residues 91-121 (HRRGLPVRGQNSKNNARTRKGPRRTVANKKK). Over residues 106-121 (ARTRKGPRRTVANKKK) the composition is skewed to basic residues.

The protein belongs to the universal ribosomal protein uS13 family. As to quaternary structure, part of the 30S ribosomal subunit. Forms a loose heterodimer with protein S19. Forms two bridges to the 50S subunit in the 70S ribosome.

Its function is as follows. Located at the top of the head of the 30S subunit, it contacts several helices of the 16S rRNA. In the 70S ribosome it contacts the 23S rRNA (bridge B1a) and protein L5 of the 50S subunit (bridge B1b), connecting the 2 subunits; these bridges are implicated in subunit movement. Contacts the tRNAs in the A and P-sites. This chain is Small ribosomal subunit protein uS13, found in Bacillus cereus (strain G9842).